A 710-amino-acid chain; its full sequence is Polyribonucleotide nucleotidyltransferase (710 aa).

Residues Asp489 and Asp495 each contribute to the Mg(2+) site. Positions 556 to 615 (PKIDTIKIDVDKIKVVIGKGGETIDKIIAETGVKIDIDDEGNVSIYSSDQAAIDRTKEII) constitute a KH domain. The 69-residue stretch at 625 to 693 (GEVYHAKVVR…EKGRVDASMK (69 aa)) folds into the S1 motif domain. The disordered stretch occupies residues 691–710 (SMKALIPRPPKPEKKEEKHD). The span at 700 to 710 (PKPEKKEEKHD) shows a compositional bias: basic and acidic residues.

Belongs to the polyribonucleotide nucleotidyltransferase family. Mg(2+) is required as a cofactor.

It is found in the cytoplasm. The enzyme catalyses RNA(n+1) + phosphate = RNA(n) + a ribonucleoside 5'-diphosphate. Involved in mRNA degradation. Catalyzes the phosphorolysis of single-stranded polyribonucleotides processively in the 3'- to 5'-direction. The chain is Polyribonucleotide nucleotidyltransferase from Streptococcus pyogenes serotype M1.